Here is a 489-residue protein sequence, read N- to C-terminus: Betaine aldehyde dehydrogenase (489 aa).

Residue Asn93 coordinates K(+). Residue 150-152 (GAW) coordinates NAD(+). The active-site Charge relay system is the Lys162. 176–179 (KPSE) serves as a coordination point for NAD(+). Residue Val180 participates in K(+) binding. 229 to 232 (EVGT) is a binding site for NAD(+). Residue Leu245 participates in K(+) binding. Residue Glu251 is the Proton acceptor of the active site. NAD(+) contacts are provided by Gly253, Cys285, and Glu386. Catalysis depends on Cys285, which acts as the Nucleophile. Position 285 is a cysteine sulfenic acid (-SOH) (Cys285). Residues Lys456 and Gly459 each coordinate K(+). Residue Glu463 is the Charge relay system of the active site.

Belongs to the aldehyde dehydrogenase family. In terms of assembly, dimer of dimers. Requires K(+) as cofactor.

The catalysed reaction is betaine aldehyde + NAD(+) + H2O = glycine betaine + NADH + 2 H(+). The protein operates within amine and polyamine biosynthesis; betaine biosynthesis via choline pathway; betaine from betaine aldehyde: step 1/1. Functionally, involved in the biosynthesis of the osmoprotectant glycine betaine. Catalyzes the irreversible oxidation of betaine aldehyde to the corresponding acid. The chain is Betaine aldehyde dehydrogenase from Chromohalobacter salexigens (strain ATCC BAA-138 / DSM 3043 / CIP 106854 / NCIMB 13768 / 1H11).